The following is a 440-amino-acid chain: MIRTSSILKNCNYRYIHCIHRCLLNEANLKDRKTHNVERVSNEKTFEQALEEERKVFGELFEAGARVENMRHTNASKIIDKYYNGLQDNSEGTSVKKEKIVFNHSQRAQRKLPNKDHEFLKETAGNDYVYERAEPSAISTKTISEQTRTLLEKIFDEDNSINKSNRELLNLNLRKGSGMEALRQPVAHSNVKFSEEVMQEIGNKIRYQTTLDQVLEPHIDYLREAVKSDYDLLRYLKQSLDIYKKRNKDLELKMNAESSNIFEDIRSACINKPAELPKPLAMTLPYIIVKSLRLGDFDFPADRKYTLISYVYNECKNNMDASLYLTICNVDFYNLLVQLLWENFQEIRYLRRVVTEMSVNGVIGNIETVDILDKIVKEMRSLNEDVFLEAGEQLSADEEVSSSANKIVNVGVLWNKDTNNDLLIVENYLKSLKKNLTRDR.

A mitochondrion-targeting transit peptide spans 1-15; that stretch reads MIRTSSILKNCNYRY.

It localises to the mitochondrion matrix. Functionally, required for the processing and/or for the stability of the CYTB and COX1 intron-containing pre-mRNAs and of the ATP6 transcript. Could be a stem-loop RNA-binding protein that plays a role in determining RNA stability. This is Mitochondrial translation factor 2 (MTF2) from Saccharomyces cerevisiae (strain ATCC 204508 / S288c) (Baker's yeast).